A 55-amino-acid chain; its full sequence is Ovomucoid (55 aa).

Positions 5 to 55 (VDCSEHPKPACTLDYRPICGSDSKTYSNKCDFCNAVMDSNGTLTLSHFGKC) constitute a Kazal-like domain. 3 disulfide bridges follow: C7–C37, C15–C34, and C23–C55. Residue N44 is glycosylated (N-linked (GlcNAc...) asparagine).

It is found in the secreted. The polypeptide is Ovomucoid (Dacelo novaeguineae (Laughing kookaburra)).